The chain runs to 198 residues: Probable molybdenum cofactor guanylyltransferase (198 aa).

Residues 9–11 (LAG), Lys-22, Asp-66, and Asp-95 each bind GTP. Asp-95 lines the Mg(2+) pocket.

Belongs to the MobA family. Mg(2+) serves as cofactor.

The protein resides in the cytoplasm. It carries out the reaction Mo-molybdopterin + GTP + H(+) = Mo-molybdopterin guanine dinucleotide + diphosphate. Transfers a GMP moiety from GTP to Mo-molybdopterin (Mo-MPT) cofactor (Moco or molybdenum cofactor) to form Mo-molybdopterin guanine dinucleotide (Mo-MGD) cofactor. The chain is Probable molybdenum cofactor guanylyltransferase from Clostridium perfringens (strain 13 / Type A).